The primary structure comprises 120 residues: MYNFNKPIGSYGEHISENFLVSKGHKILTKNFRCRSGEIDIISSHNNYICFTEVKTRYNYSFGIPCESVTITKIKKIRNTAKFYIYINKLFKNNFKFNVIEIILNKYSNDYSINFIENAF.

The protein belongs to the UPF0102 family.

The polypeptide is UPF0102 protein NT01CX_2205 (Clostridium novyi (strain NT)).